Here is a 333-residue protein sequence, read N- to C-terminus: 4-hydroxyproline 2-epimerase (333 aa).

The active-site Proton acceptor is Cys-91. Residues 92 to 93 (GH), His-225, and Asp-250 each bind substrate. Cys-254 acts as the Proton donor in catalysis. 255-256 (GT) provides a ligand contact to substrate.

Belongs to the proline racemase family.

The catalysed reaction is trans-4-hydroxy-L-proline = cis-4-hydroxy-D-proline. Functionally, catalyzes the epimerization of trans-4-hydroxy-L-proline (t4LHyp) to cis-4-hydroxy-D-proline (c4DHyp). Is likely involved in a degradation pathway that converts t4LHyp to alpha-ketoglutarate. Displays no proline racemase activity. In Streptosporangium roseum (strain ATCC 12428 / DSM 43021 / JCM 3005 / KCTC 9067 / NCIMB 10171 / NRRL 2505 / NI 9100), this protein is 4-hydroxyproline 2-epimerase.